The following is a 273-amino-acid chain: Large ribosomal subunit protein uL2cz/uL2cy (273 aa).

2 disordered regions span residues 1 to 22 and 225 to 273; these read MAKHLYKTPIPSTRKGTVDRQV and PVDH…RRRK.

It belongs to the universal ribosomal protein uL2 family. In terms of assembly, part of the 50S ribosomal subunit.

Its subcellular location is the plastid. It localises to the chloroplast. This chain is Large ribosomal subunit protein uL2cz/uL2cy (rpl2-A), found in Saccharum hybrid (Sugarcane).